The following is a 264-amino-acid chain: Proteasome subunit beta type-4 (264 aa).

Methionine 1 is subject to N-acetylmethionine. Residues 1 to 45 constitute a propeptide that is removed on maturation; the sequence is MEAFWESRAGHWAGGPAPGQFYRIPATPSGLMDPASAPCEGPITR. Residue tyrosine 102 is modified to Phosphotyrosine.

Belongs to the peptidase T1B family. As to quaternary structure, the 26S proteasome consists of a 20S proteasome core and two 19S regulatory subunits. The 20S proteasome core is a barrel-shaped complex made of 28 subunits that are arranged in four stacked rings. The two outer rings are each formed by seven alpha subunits, and the two inner rings are formed by seven beta subunits. The proteolytic activity is exerted by three beta-subunits PSMB5, PSMB6 and PSMB7. Forms a ternary complex with SMAD1 and OAZ1 before PSMB4 is incorporated into the 20S proteasome. Interacts with PRPF19. As to expression, detected in liver (at protein level).

It localises to the cytoplasm. The protein localises to the nucleus. In terms of biological role, non-catalytic component of the 20S core proteasome complex involved in the proteolytic degradation of most intracellular proteins. This complex plays numerous essential roles within the cell by associating with different regulatory particles. Associated with two 19S regulatory particles, forms the 26S proteasome and thus participates in the ATP-dependent degradation of ubiquitinated proteins. The 26S proteasome plays a key role in the maintenance of protein homeostasis by removing misfolded or damaged proteins that could impair cellular functions, and by removing proteins whose functions are no longer required. Associated with the PA200 or PA28, the 20S proteasome mediates ubiquitin-independent protein degradation. This type of proteolysis is required in several pathways including spermatogenesis (20S-PA200 complex) or generation of a subset of MHC class I-presented antigenic peptides (20S-PA28 complex). SMAD1/OAZ1/PSMB4 complex mediates the degradation of the CREBBP/EP300 repressor SNIP1. In Mus musculus (Mouse), this protein is Proteasome subunit beta type-4 (Psmb4).